The sequence spans 1356 residues: Probable aldehyde oxidase 3 (1356 aa).

The 88-residue stretch at 10-97 (RAVVVAVNGE…HCAVTTSEGI (88 aa)) folds into the 2Fe-2S ferredoxin-type domain. [2Fe-2S] cluster contacts are provided by Cys49, Cys54, Cys57, and Cys79. In terms of domain architecture, FAD-binding PCMH-type spans 245–437 (VVVTGDGWFH…TFQTFRAAPR (193 aa)). Residues 552–576 (NGSFTNGTANGIVDSSPEKHSNVDS) are disordered.

The protein belongs to the xanthine dehydrogenase family. In terms of assembly, aldehyde oxidases (AO) are homodimers and heterodimers of AO subunits. [2Fe-2S] cluster serves as cofactor. FAD is required as a cofactor. Requires Mo-molybdopterin as cofactor.

The catalysed reaction is an aldehyde + O2 + H2O = a carboxylate + H2O2 + H(+). In Oryza sativa subsp. japonica (Rice), this protein is Probable aldehyde oxidase 3.